A 419-amino-acid polypeptide reads, in one-letter code: UDP-N-acetylglucosamine 1-carboxyvinyltransferase (419 aa).

22–23 (KN) contributes to the phosphoenolpyruvate binding site. R95 lines the UDP-N-acetyl-alpha-D-glucosamine pocket. The active-site Proton donor is C119. C119 is modified (2-(S-cysteinyl)pyruvic acid O-phosphothioketal). Residues 164 to 167 (KVSV), D308, and I330 contribute to the UDP-N-acetyl-alpha-D-glucosamine site.

It belongs to the EPSP synthase family. MurA subfamily.

The protein resides in the cytoplasm. It carries out the reaction phosphoenolpyruvate + UDP-N-acetyl-alpha-D-glucosamine = UDP-N-acetyl-3-O-(1-carboxyvinyl)-alpha-D-glucosamine + phosphate. It participates in cell wall biogenesis; peptidoglycan biosynthesis. In terms of biological role, cell wall formation. Adds enolpyruvyl to UDP-N-acetylglucosamine. This chain is UDP-N-acetylglucosamine 1-carboxyvinyltransferase, found in Rickettsia akari (strain Hartford).